A 1744-amino-acid polypeptide reads, in one-letter code: Complement C4-B (1744 aa).

The signal sequence occupies residues 1-19 (MRLLWGLIWASSFFTLSLQ). Cys68 and Cys97 form a disulfide bridge. Asn226 carries N-linked (GlcNAc...) asparagine glycosylation. Cys635 and Cys669 are joined by a disulfide. Positions 676–679 (RKKR) are excised as a propeptide. 3 disulfide bridges follow: Cys702-Cys728, Cys703-Cys735, and Cys716-Cys736. In terms of domain architecture, Anaphylatoxin-like spans 702 to 736 (CCQDGVTRLPMMRSCEQRAARVQQPDCREPFLSCC). N-linked (GlcNAc...) asparagine glycosylation is present at Asn862. Ser918 is modified (phosphoserine). The isoglutamyl cysteine thioester (Cys-Gln) cross-link spans 1010 to 1013 (CGEQ). N-linked (GlcNAc...) asparagine glycans are attached at residues Asn1328 and Asn1391. Tyr1417, Tyr1420, and Tyr1422 each carry sulfotyrosine. The propeptide occupies 1447–1453 (RRNRRRR). 5 cysteine pairs are disulfide-bonded: Cys1471–Cys1535, Cys1583–Cys1588, Cys1595–Cys1673, Cys1618–Cys1742, and Cys1718–Cys1727. One can recognise an NTR domain in the interval 1595-1742 (CPRQRRALER…FLQEYGTQGC (148 aa)).

In terms of assembly, in absence of complement activation, circulates in blood as a disulfide-linked trimer of an alpha, beta and gamma chain. Complement C4b is composed of complement C4b-A, complement C4 beta and complement C4 gamma chains that are associated via disulfide bonds. Non-enzymatic component of the C3 convertase, also named C4bC2b, composed of the serine protease complement C2b (C2), as well as complement C4b. Non-enzymatic component of the C5 convertase, also named C4bC2bC3b, composed of the serine protease complement C2b (C2), complement C3b, as well as complement C4b. Interacts with CR1 (via Sushi 1 and Sushi 2 domains). As to quaternary structure, (Microbial infection) Binds B.burgdorferi OspC, the interaction is inhibited by complement factor C2. This binding may inhibit the complement cascade and allow the bacteria to survive in the host bloodstream. Post-translationally, prior to secretion, the single-chain precursor is enzymatically cleaved by plasminogen (PLG) to yield non-identical chains alpha, beta and gamma. During activation of the complement systems, the alpha chain is cleaved into C4a and C4b by different proteases depending on the complement pathway: C4b stays linked to the beta and gamma chains, while C4a is released in the plasma. The alpha chain is cleaved by C1S to generate C4a and C4b following activation by the classical complement system. The alpha chain is cleaved to generate C4a and C4b by MASP2 following activation by the lectin complement system. The alpha chain is cleaved by GZMK to generate C4a and C4b following activation by the GZMK complement system. Further degradation of C4b by C1 into the inactive fragments C4c and C4d blocks the generation of C3 convertase. The proteolytic cleavages often are incomplete so that many structural forms can be found in plasma. In terms of processing, upon activation, the internal thioester bond reacts with carbohydrate antigens on the target surface to form amide or ester bonds, leading to covalent association with the surface of pathogens. Complement C4b interacts with complement C3b via a thioester linkage. Post-translationally, N- and O-glycosylated. O-glycosylated with a core 1 or possibly core 8 glycan. In terms of tissue distribution, complement component C4 is expressed at highest levels in the liver, at moderate levels in the adrenal cortex, adrenal medulla, thyroid gland, and the kidney, and at lowest levels in the heart, ovary, small intestine, thymus, pancreas and spleen. The extra-hepatic sites of expression may be important for the local protection and inflammatory response.

Its subcellular location is the secreted. It localises to the synapse. The protein resides in the cell projection. The protein localises to the axon. It is found in the dendrite. Its subcellular location is the cell surface. Its function is as follows. Precursor of non-enzymatic components of the classical, lectin and GZMK complement pathways, which consist in a cascade of proteins that leads to phagocytosis and breakdown of pathogens and signaling that strengthens the adaptive immune system. In terms of biological role, non-enzymatic component of C3 and C5 convertases. Generated following cleavage by complement proteases (C1S, MASP2 or GZMK, depending on the complement pathway), it covalently attaches to the surface of pathogens, where it acts as an opsonin that marks the surface of antigens for removal. It then recruits the serine protease complement C2b to form the C3 and C5 convertases, which cleave and activate C3 and C5, respectively, the next components of the complement pathways. Complement C4b-B isotype catalyzes the transacylation of the thioester carbonyl group to form ester bonds with carbohydrate antigens, while C4b-A isotype is responsible for effective binding to form amide bonds with immune aggregates or protein antigens. Functionally, putative humoral mediator released following cleavage by complement proteases (C1S, MASP2 or GZMK, depending on the complement pathway). While it is strongly similar to anaphylatoxins, its role is unclear. Was reported to act as a mediator of local inflammatory process; however these effects were probably due to contamination with C3a and/C5a anaphylatoxins in biological assays. The polypeptide is Complement C4-B (Homo sapiens (Human)).